The following is a 632-amino-acid chain: 2-hydroxyacyl-CoA lyase 2 (632 aa).

A helical membrane pass occupies residues 13–33; it reads LFPSFLLLACGTLVAALLGAA. A thiamine diphosphate-binding site is contributed by E98. Residues 470–550 are thiamine pyrophosphate binding; sequence DFVGTAAHLV…VMALVGNDAG (81 aa). D521 and N547 together coordinate Mg(2+).

Belongs to the TPP enzyme family. Mg(2+) is required as a cofactor. The cofactor is thiamine diphosphate. As to expression, expressed in all tissues tested, with highest expression in heart, pancreas and placenta.

Its subcellular location is the endoplasmic reticulum membrane. It catalyses the reaction 2-hydroxyoctadecanoyl-CoA = heptadecanal + formyl-CoA. The enzyme catalyses (2R)-hydroxyhexadecanoyl-CoA = pentadecanal + formyl-CoA. In terms of biological role, endoplasmic reticulum 2-OH acyl-CoA lyase involved in the cleavage (C1 removal) reaction in the fatty acid alpha-oxydation in a thiamine pyrophosphate (TPP)-dependent manner. Involved in the phytosphingosine degradation pathway. The polypeptide is 2-hydroxyacyl-CoA lyase 2 (Homo sapiens (Human)).